A 1034-amino-acid chain; its full sequence is AP-3 complex subunit delta (1034 aa).

HEAT repeat units follow at residues 35–72 (KYISTCIEEIKQELRQDNISVKCNAVAKLTYIQMLGYD), 143–180 (DLSRDLANDIMTLMSSTKPYLRMKAVLMMYKVFLRYPE), 181–217 (ALRPAFPKLKEKLEDPDPGVQSAAVNVICELARKNPK), 219–255 (YLPLAPIFFKLMTTSTNNWMLIKIIKLFGALTPLEPR), 258–297 (KKLIEPLTNLIHSTSAMSLLYECINTVIAVLISISSGMPN), 299–337 (SASIQLCVQKLRILIEDSDQNLKYLGLLAMSKILKTHPK), 338–374 (SVQAHKDLILACLDDKDESIRLRALDLLYGMVSKKNL), 376–414 (EIVKRLLGHMERAEGSAYRDELLYKVIEICAQSSYLYVT), 415–452 (NFEWYLTVLVELIQLEAGSRHGRLIAEQLLDVAIRVPV), and 570–609 (NSACMLIEMLRNQLSTSTDAMAMDTTTEGGIPPLAIEIVQ). Disordered regions lie at residues 637-660 (DLDEWINAPPPEDAASSSSSEHDK), 669-688 (QAGTGADGGEKRRQSLELTP), 701-723 (EQSNNPHYLKSTPTASGASNADQ), and 758-1034 (QEQQ…KEIL). Phosphoserine is present on Ser683. At Thr687 the chain carries Phosphothreonine. Residues 769–784 (GKKKHKKGKKSKKAKN) are compositionally biased toward basic residues. Composition is skewed to basic and acidic residues over residues 822–836 (KDGKYDPNDPHRALD) and 882–906 (KDKDKDKERKVKREHRESKRERKEA). Residues 928–942 (SATSNNNNTSTVLPD) show a composition bias toward low complexity. Residues 986 to 1003 (KVHKKKHKKEKSQRKEKK) show a composition bias toward basic residues. The segment covering 1007–1016 (ESASVSAIVS) has biased composition (low complexity). Polar residues predominate over residues 1025–1034 (GISTPSKEIL).

This sequence belongs to the adaptor complexes large subunit family. As to quaternary structure, adaptor protein complex 3 (AP-3) is a heterotetramer composed of two large chains (delta and beta3), a medium chain (mu3) and a small chain (sigma3).

It localises to the cytoplasmic vesicle. The protein resides in the clathrin-coated vesicle membrane. The protein localises to the golgi apparatus. Functionally, part of the AP-3 complex, an adapter-related complex which is not clathrin-associated. The complex is associated with the Golgi region as well as more peripheral structures. It facilitates the budding of vesicles from the Golgi membrane and may be directly involved in trafficking to lysosomes. In terms of biological role, may be a coat protein involved in the formation of specialized structures like pigment granules. This Drosophila melanogaster (Fruit fly) protein is AP-3 complex subunit delta (g).